The primary structure comprises 189 residues: Interferon alpha-4 (189 aa).

The first 23 residues, 1-23, serve as a signal peptide directing secretion; it reads MALSFSLLMAVLVLSYKSICSLG. Disulfide bonds link C24/C122 and C52/C162.

The protein belongs to the alpha/beta interferon family.

It is found in the secreted. In terms of biological role, produced by macrophages, IFN-alpha have antiviral activities. Interferon stimulates the production of two enzymes: a protein kinase and an oligoadenylate synthetase. The chain is Interferon alpha-4 (IFNA4) from Homo sapiens (Human).